We begin with the raw amino-acid sequence, 496 residues long: Glycerol kinase (496 aa).

Thr12 contacts ADP. Thr12, Thr13, and Ser14 together coordinate ATP. Thr12 provides a ligand contact to sn-glycerol 3-phosphate. Arg16 provides a ligand contact to ADP. Sn-glycerol 3-phosphate is bound by residues Arg82, Glu83, and Tyr134. 3 residues coordinate glycerol: Arg82, Glu83, and Tyr134. His230 is modified (phosphohistidine; by HPr). Asp244 contacts sn-glycerol 3-phosphate. Glycerol is bound by residues Asp244 and Gln245. Thr266 and Gly309 together coordinate ADP. Residues Thr266, Gly309, Gln313, and Gly410 each coordinate ATP. Positions 410 and 414 each coordinate ADP.

Belongs to the FGGY kinase family. Homotetramer and homodimer (in equilibrium). The phosphoenolpyruvate-dependent sugar phosphotransferase system (PTS), including enzyme I, and histidine-containing protein (HPr) are required for the phosphorylation, which leads to the activation of the enzyme.

It carries out the reaction glycerol + ATP = sn-glycerol 3-phosphate + ADP + H(+). It participates in polyol metabolism; glycerol degradation via glycerol kinase pathway; sn-glycerol 3-phosphate from glycerol: step 1/1. Its activity is regulated as follows. Activated by phosphorylation and inhibited by fructose 1,6-bisphosphate (FBP). Functionally, key enzyme in the regulation of glycerol uptake and metabolism. Catalyzes the phosphorylation of glycerol to yield sn-glycerol 3-phosphate. This chain is Glycerol kinase, found in Bacillus cereus (strain ATCC 14579 / DSM 31 / CCUG 7414 / JCM 2152 / NBRC 15305 / NCIMB 9373 / NCTC 2599 / NRRL B-3711).